A 507-amino-acid polypeptide reads, in one-letter code: ATP synthase subunit alpha, chloroplastic (507 aa).

170–177 (GDRQTGKA) lines the ATP pocket.

This sequence belongs to the ATPase alpha/beta chains family. In terms of assembly, F-type ATPases have 2 components, CF(1) - the catalytic core - and CF(0) - the membrane proton channel. CF(1) has five subunits: alpha(3), beta(3), gamma(1), delta(1), epsilon(1). CF(0) has four main subunits: a, b, b' and c.

The protein localises to the plastid. Its subcellular location is the chloroplast thylakoid membrane. It catalyses the reaction ATP + H2O + 4 H(+)(in) = ADP + phosphate + 5 H(+)(out). In terms of biological role, produces ATP from ADP in the presence of a proton gradient across the membrane. The alpha chain is a regulatory subunit. The polypeptide is ATP synthase subunit alpha, chloroplastic (Calycanthus floridus var. glaucus (Eastern sweetshrub)).